Here is a 401-residue protein sequence, read N- to C-terminus: Mu-type opioid receptor (401 aa).

The Extracellular segment spans residues 1–69 (MDSSADPRNA…CPPTGSPSMV (69 aa)). N-linked (GlcNAc...) asparagine glycans are attached at residues Asn-9, Asn-12, Asn-34, Asn-41, and Asn-49. The chain crosses the membrane as a helical span at residues 70–94 (TAITIMALYSIVCVVGLFGNFLVMY). The Cytoplasmic segment spans residues 95 to 107 (VIVRYTKMKTATN). Residues 108-132 (IYIFNLALADALATSTLPFQSVNYL) form a helical membrane-spanning segment. Topologically, residues 133 to 143 (MGTWPFGTILC) are extracellular. Cys-143 and Cys-220 form a disulfide bridge. A helical transmembrane segment spans residues 144 to 166 (KIVISIDYYNMFTSIFTLCTMSV). At 167–186 (DRYIAVCHPVKALDFRTPRN) the chain is on the cytoplasmic side. Position 169 is a phosphotyrosine (Tyr-169). A helical membrane pass occupies residues 187 to 208 (AKIINVCNWILSSAIGLPVMFM). At 209-231 (ATTKYRNGSIDCALTFSHPTWYW) the chain is on the extracellular side. A helical membrane pass occupies residues 232-256 (ENLLKICVFIFAFIMPVLIITVCYG). The Cytoplasmic segment spans residues 257-280 (LMILRLKSVRMLSGSKEKDRNLRR). A helical membrane pass occupies residues 281–307 (ITRMVLVVVAVFIVCWTPIHIYVIIKA). Residues 308–315 (LITIPETT) lie on the Extracellular side of the membrane. The helical transmembrane segment at 316-339 (FQTVSWHFCIALGYTNSCLNPVLY) threads the bilayer. An NPxxY; plays a role in stabilizing the activated conformation of the receptor motif is present at residues 335 to 339 (NPVLY). At 340 to 401 (AFLDENFKRC…NLEAETAPLP (62 aa)) the chain is on the cytoplasmic side. Cys-354 carries the S-palmitoyl cysteine lipid modification. Residues 365–385 (NSARIRQNTRDHPSTANTVDR) are disordered. Phosphoserine is present on Ser-366. The residue at position 373 (Thr-373) is a Phosphothreonine. Residue Ser-378 is modified to Phosphoserine. Thr-397 is subject to Phosphothreonine.

This sequence belongs to the G-protein coupled receptor 1 family. In terms of assembly, forms homooligomers and heterooligomers with other GPCRs, such as OPRD1, OPRK1, OPRL1, NPFFR2, ADRA2A, SSTR2, CNR1 and CCR5 (probably in dimeric forms). Interacts with heterotrimeric G proteins; interaction with a heterotrimeric complex containing GNAI1, GNB1 and GNG2 stabilizes the active conformation of the receptor and increases its affinity for endomorphin-2, the synthetic opioid peptide DAMGO and for morphinan agonists. Interacts with PPL; the interaction disrupts agonist-mediated G-protein activation. Interacts (via C-terminus) with DNAJB4 (via C-terminus). Interacts with calmodulin; the interaction inhibits the constitutive activity of OPRM1; it abolishes basal and attenuates agonist-stimulated G-protein coupling. Interacts with FLNA, PLD2, RANBP9 and WLS and GPM6A. Interacts with RTP4. Interacts with SYP and GNAS. Interacts with RGS9, RGS17, RGS20, RGS4, PPP1R9B and HINT1. In terms of processing, phosphorylated. Differentially phosphorylated in basal and agonist-induced conditions. Agonist-mediated phosphorylation modulates receptor internalization. Phosphorylated by GRK2 in a agonist-dependent manner. Phosphorylation at Tyr-169 requires receptor activation, is dependent on non-receptor protein tyrosine kinase Src and results in a decrease in agonist efficacy by reducing G-protein coupling efficiency. Phosphorylated on tyrosine residues; the phosphorylation is involved in agonist-induced G-protein-independent receptor down-regulation. Phosphorylation at Ser-378 is involved in G-protein-dependent but not beta-arrestin-dependent activation of the ERK pathway. Ubiquitinated. A basal ubiquitination seems not to be related to degradation. Ubiquitination is increased upon formation of OPRM1:OPRD1 oligomers leading to proteasomal degradation; the ubiquitination is diminished by RTP4.

The protein resides in the cell membrane. It is found in the cell projection. The protein localises to the axon. Its subcellular location is the perikaryon. It localises to the dendrite. The protein resides in the endosome. Its function is as follows. Receptor for endogenous opioids such as beta-endorphin and endomorphin. Receptor for natural and synthetic opioids including morphine, heroin, DAMGO, fentanyl, etorphine, buprenorphin and methadone. Also activated by enkephalin peptides, such as Met-enkephalin or Met-enkephalin-Arg-Phe, with higher affinity for Met-enkephalin-Arg-Phe. Agonist binding to the receptor induces coupling to an inactive GDP-bound heterotrimeric G-protein complex and subsequent exchange of GDP for GTP in the G-protein alpha subunit leading to dissociation of the G-protein complex with the free GTP-bound G-protein alpha and the G-protein beta-gamma dimer activating downstream cellular effectors. The agonist- and cell type-specific activity is predominantly coupled to pertussis toxin-sensitive G(i) and G(o) G alpha proteins, GNAI1, GNAI2, GNAI3 and GNAO1, and to a lesser extent to pertussis toxin-insensitive G alpha proteins GNAZ and GNA15. They mediate an array of downstream cellular responses, including inhibition of adenylate cyclase activity and both N-type and L-type calcium channels, activation of inward rectifying potassium channels, mitogen-activated protein kinase (MAPK), phospholipase C (PLC), phosphoinositide/protein kinase (PKC), phosphoinositide 3-kinase (PI3K) and regulation of NF-kappa-B. Also couples to adenylate cyclase stimulatory G alpha proteins. The selective temporal coupling to G-proteins and subsequent signaling can be regulated by RGSZ proteins, such as RGS9, RGS17 and RGS4. Phosphorylation by members of the GPRK subfamily of Ser/Thr protein kinases and association with beta-arrestins is involved in short-term receptor desensitization. Beta-arrestins associate with the GPRK-phosphorylated receptor and uncouple it from the G-protein thus terminating signal transduction. The phosphorylated receptor is internalized through endocytosis via clathrin-coated pits which involves beta-arrestins. The activation of the ERK pathway occurs either in a G-protein-dependent or a beta-arrestin-dependent manner and is regulated by agonist-specific receptor phosphorylation. Acts as a class A G-protein coupled receptor (GPCR) which dissociates from beta-arrestin at or near the plasma membrane and undergoes rapid recycling. Receptor down-regulation pathways are varying with the agonist and occur dependent or independent of G-protein coupling. Endogenous ligands induce rapid desensitization, endocytosis and recycling. Heterooligomerization with other GPCRs can modulate agonist binding, signaling and trafficking properties. Involved in neurogenesis. In Sus scrofa (Pig), this protein is Mu-type opioid receptor (OPRM1).